We begin with the raw amino-acid sequence, 845 residues long: MGCVKLVFFMLLKLDLLEFKNMFTVNPNASDYCYDYTDQRMQSYPRTLFWNKSTDCCSWDGIHCDETTGQVVELDLRCSQLQGKFHSNSSLFQLSNLKRLDLSFNDFTGSLISPKFGEFSDLTHLDLSDSNFTGVIPSEISHLSKLHVLRIHDLNELSLGPHNFELLLKNLTQLRELNLDSVNISSTIPSNFSSHLTNLWLPYTELRGVLPERVFHLSDLEFLHLSYNPQLTVRFPTTKWNSSASLMKLYVHSVNIADRIPESFSHLTSLHALYMGRCNLSGHIPKPLWNLTNIESLFLGDNHLEGPIPQLTRFEKLKRLSLGNNNLHGGLEFLSFNRSWTQLEILYFSSNYLTGPIPSNVSGLQNLGWLFLSSNHLNGSIPSWIFSLPSLVVLDLSNNTFSGKIQEFKSKTLSTVTLKQNQLEGPIPNSLLNQESLQFLLLSHNNISGYISSSICNLKTLMVLDLGSNNLEGTIPQCVGERNEYLLDLDLSNNRLSGTINTTFSIGNSFKAISLHGNKLTGKVPRSLINCKYLKLLDLGNNQLNDTFPNWLGYLSQLKILSLRSNKLHGPIKSSGSTNLFMRLQILDLSSNGFSGNLPERILGNLQTMKKIDENTRFPEYISDQYEIYYVYLTTITTKGQDYDSVRILDSNMIINLSKNRFEGHIPSIIGDLVGLRTLNLSRNALEGHIPASFQNLSVLESLDLSSNRISGEIPQQLASLTFLEVLNLSHNHLVGCIPKGKQFDSFGNTSYQGNDGLRGFPLSKLCGVDDQVTTPAELDQEEEEEDSPMISWQGVLVGYGCGLVIGLSVIYIMWSTQYPAWFSRMDLKLEHIITTRMKKHKKRY.

The first 19 residues, 1 to 19, serve as a signal peptide directing secretion; that stretch reads MGCVKLVFFMLLKLDLLEF. The N-cap stretch occupies residues 20 to 70; it reads KNMFTVNPNASDYCYDYTDQRMQSYPRTLFWNKSTDCCSWDGIHCDETTGQ. The Extracellular portion of the chain corresponds to 20–794; it reads KNMFTVNPNA…EEDSPMISWQ (775 aa). N-linked (GlcNAc...) asparagine glycans are attached at residues N28, N51, and N88. The LRR 1; degenerate repeat unit spans residues 71–94; sequence VVELDLRCSQLQGKFHSNSSLFQL. LRR repeat units follow at residues 95 to 118, 119 to 143, 144 to 171, 172 to 193, 194 to 217, 219 to 242, 244 to 266, 267 to 291, 292 to 316, 318 to 338, 340 to 364, 365 to 388, 390 to 410, 411 to 434, 436 to 458, 459 to 482, 484 to 506, 507 to 531, 532 to 554, 555 to 579, 581 to 605, 649 to 672, 673 to 696, 698 to 721, and 723 to 741; these read SNLKRLDLSFNDFTGSLISPKFGE, FSDLTHLDLSDSNFTGVIPSEISHL, SKLHVLRIHDLNELSLGPHNFELLLKNL, TQLRELNLDSVNISSTIPSNFS, SHLTNLWLPYTELRGVLPERVFHL, DLEFLHLSYNPQLTVRFPTTKWNS, ASLMKLYVHSVNIADRIPESFSH, LTSLHALYMGRCNLSGHIPKPLWNL, TNIESLFLGDNHLEGPIPQLTRFEK, KRLSLGNNNLHGGLEFLSFNR, WTQLEILYFSSNYLTGPIPSNVSGL, QNLGWLFLSSNHLNGSIPSWIFSL, SLVVLDLSNNTFSGKIQEFKS, KTLSTVTLKQNQLEGPIPNSLLNQ, SLQFLLLSHNNISGYISSSICNL, KTLMVLDLGSNNLEGTIPQCVGER, EYLLDLDLSNNRLSGTINTTFSI, GNSFKAISLHGNKLTGKVPRSLINC, KYLKLLDLGNNQLNDTFPNWLGY, LSQLKILSLRSNKLHGPIKSSGSTN, FMRLQILDLSSNGFSGNLPERILGN, LDSNMIINLSKNRFEGHIPSIIGD, LVGLRTLNLSRNALEGHIPASFQN, SVLESLDLSSNRISGEIPQQLASL, and FLEVLNLSHNHLVGCIPKG. Residues N131, N170, N183, and N191 are each glycosylated (N-linked (GlcNAc...) asparagine). N241 is a glycosylation site (N-linked (GlcNAc...) asparagine). Residues N279 and N290 are each glycosylated (N-linked (GlcNAc...) asparagine). N-linked (GlcNAc...) asparagine glycosylation is found at N337, N360, N378, and N398. A glycan (N-linked (GlcNAc...) asparagine) is linked at N446. N501 carries an N-linked (GlcNAc...) asparagine glycan. N545 is a glycosylation site (N-linked (GlcNAc...) asparagine). Residues N656, N680, and N696 are each glycosylated (N-linked (GlcNAc...) asparagine). N-linked (GlcNAc...) asparagine glycans are attached at residues N728 and N749. The tract at residues 742 to 794 is C-cap/acidic domain; that stretch reads KQFDSFGNTSYQGNDGLRGFPLSKLCGVDDQVTTPAELDQEEEEEDSPMISWQ. Residues 795 to 815 traverse the membrane as a helical segment; it reads GVLVGYGCGLVIGLSVIYIMW. Over 816 to 845 the chain is Cytoplasmic; sequence STQYPAWFSRMDLKLEHIITTRMKKHKKRY.

The protein belongs to the RLP family.

Its subcellular location is the cell membrane. Functionally, at the opposite of its homolog Cf-9 found in S.pimpinellifolium, was not able to confer resistance to the fungal pathogen C.fulvum. This Solanum lycopersicum (Tomato) protein is Receptor-like protein Cf-9 homolog.